Here is a 163-residue protein sequence, read N- to C-terminus: MHCPFCAYADTRVVDSRLADDGGSVRRRRECPQCGQRFTTFERAELALPVVVKTDGRRESFNEEKLQRGLTRALSKRPVATARVDAAVRMIQRRIRERGEREIPARLIGELVMEALRDLDPVAYVRFASVYRRFEDVDAFSVEIARMKEAEVPDGGDDLNRGD.

A zinc finger lies at 3-34; that stretch reads CPFCAYADTRVVDSRLADDGGSVRRRRECPQC. In terms of domain architecture, ATP-cone spans 49 to 139; it reads PVVVKTDGRR…VYRRFEDVDA (91 aa).

It belongs to the NrdR family. Zn(2+) is required as a cofactor.

In terms of biological role, negatively regulates transcription of bacterial ribonucleotide reductase nrd genes and operons by binding to NrdR-boxes. This Acidithiobacillus ferrooxidans (strain ATCC 23270 / DSM 14882 / CIP 104768 / NCIMB 8455) (Ferrobacillus ferrooxidans (strain ATCC 23270)) protein is Transcriptional repressor NrdR.